The sequence spans 191 residues: Protein Ves (191 aa).

Belongs to the Ves family.

This is Protein Ves from Shigella flexneri.